The chain runs to 532 residues: Exopolysaccharide phosphotransferase CpsY (532 aa).

Belongs to the stealth family.

This chain is Exopolysaccharide phosphotransferase CpsY (cpsY), found in Mycobacterium bovis (strain ATCC BAA-935 / AF2122/97).